Reading from the N-terminus, the 373-residue chain is Carnosine N-methyltransferase (373 aa).

S-adenosyl-L-methionine contacts are provided by glutamine 110, arginine 113, glycine 154, glutamate 175, aspartate 242, phenylalanine 243, and cysteine 262. A carnosine-binding site is contributed by aspartate 266. Tyrosine 274 provides a ligand contact to S-adenosyl-L-methionine. The carnosine site is built by histidine 297 and tyrosine 356.

Belongs to the carnosine N-methyltransferase family.

The protein localises to the cytoplasm. It localises to the nucleus. It carries out the reaction carnosine + S-adenosyl-L-methionine = anserine + S-adenosyl-L-homocysteine + H(+). Functionally, N-methyltransferase that mediates the formation of anserine (beta-alanyl-N(Pi)-methyl-L-histidine) from carnosine. Also methylates other L-histidine-containing di- and tripeptides such as Gly-Gly-His, Gly-His and homocarnosine (GABA-His). The protein is Carnosine N-methyltransferase of Schizosaccharomyces pombe (strain 972 / ATCC 24843) (Fission yeast).